The primary structure comprises 352 residues: Glutamine synthetase cytosolic isozyme (352 aa).

Positions 19–98 constitute a GS beta-grasp domain; that stretch reads FIAEYIWIDA…VMCDTYTPAG (80 aa). One can recognise a GS catalytic domain in the interval 105 to 352; that stretch reads KRCNAAKIFS…TSMIAETTIL (248 aa).

The protein belongs to the glutamine synthetase family. In terms of assembly, homooctamer.

It is found in the cytoplasm. It carries out the reaction L-glutamate + NH4(+) + ATP = L-glutamine + ADP + phosphate + H(+). This chain is Glutamine synthetase cytosolic isozyme (GLN1), found in Daucus carota (Wild carrot).